The chain runs to 62 residues: Photosystem II reaction center protein Z (62 aa).

Helical transmembrane passes span alanine 8–alanine 28 and phenylalanine 41–isoleucine 61.

It belongs to the PsbZ family. In terms of assembly, PSII is composed of 1 copy each of membrane proteins PsbA, PsbB, PsbC, PsbD, PsbE, PsbF, PsbH, PsbI, PsbJ, PsbK, PsbL, PsbM, PsbT, PsbY, PsbZ, Psb30/Ycf12, at least 3 peripheral proteins of the oxygen-evolving complex and a large number of cofactors. It forms dimeric complexes.

It localises to the plastid. Its subcellular location is the chloroplast thylakoid membrane. In terms of biological role, may control the interaction of photosystem II (PSII) cores with the light-harvesting antenna, regulates electron flow through the 2 photosystem reaction centers. PSII is a light-driven water plastoquinone oxidoreductase, using light energy to abstract electrons from H(2)O, generating a proton gradient subsequently used for ATP formation. This Oenothera elata subsp. hookeri (Hooker's evening primrose) protein is Photosystem II reaction center protein Z.